The chain runs to 249 residues: Purine nucleoside phosphorylase ML0918 (249 aa).

Positions 72, 109, and 126 each coordinate Zn(2+).

This sequence belongs to the purine nucleoside phosphorylase YfiH/LACC1 family. Homodimer. Requires Cu(2+) as cofactor. It depends on Zn(2+) as a cofactor.

It catalyses the reaction adenosine + phosphate = alpha-D-ribose 1-phosphate + adenine. The enzyme catalyses S-methyl-5'-thioadenosine + phosphate = 5-(methylsulfanyl)-alpha-D-ribose 1-phosphate + adenine. It carries out the reaction inosine + phosphate = alpha-D-ribose 1-phosphate + hypoxanthine. The catalysed reaction is adenosine + H2O + H(+) = inosine + NH4(+). In terms of biological role, purine nucleoside enzyme that catalyzes the phosphorolysis of adenosine and inosine nucleosides, yielding D-ribose 1-phosphate and the respective free bases, adenine and hypoxanthine. Also catalyzes the phosphorolysis of S-methyl-5'-thioadenosine into adenine and S-methyl-5-thio-alpha-D-ribose 1-phosphate. Also has adenosine deaminase activity. The sequence is that of Purine nucleoside phosphorylase ML0918 from Mycobacterium leprae (strain TN).